Here is a 198-residue protein sequence, read N- to C-terminus: Recombination protein RecR (198 aa).

The C4-type zinc-finger motif lies at 57–72 (CRQCRTLSEEELCPQC). Residues 80–174 (SLLCVVEGPL…TLSRIAHGVP (95 aa)) form the Toprim domain.

This sequence belongs to the RecR family.

May play a role in DNA repair. It seems to be involved in an RecBC-independent recombinational process of DNA repair. It may act with RecF and RecO. The sequence is that of Recombination protein RecR from Pseudomonas aeruginosa (strain LESB58).